Reading from the N-terminus, the 267-residue chain is Placental prolactin-related protein 2 (267 aa).

Residues Asn-99 and Asn-121 are each glycosylated (N-linked (GlcNAc...) asparagine). 2 disulfides stabilise this stretch: Cys-126–Cys-244 and Cys-261–Cys-267.

The protein belongs to the somatotropin/prolactin family.

It localises to the secreted. Placental prolactin-related proteins may play a specific role during gestation. The sequence is that of Placental prolactin-related protein 2 (PRP2) from Bos taurus (Bovine).